The chain runs to 122 residues: Large ribosomal subunit protein uL14 (122 aa).

This sequence belongs to the universal ribosomal protein uL14 family. Part of the 50S ribosomal subunit. Forms a cluster with proteins L3 and L19. In the 70S ribosome, L14 and L19 interact and together make contacts with the 16S rRNA in bridges B5 and B8.

Its function is as follows. Binds to 23S rRNA. Forms part of two intersubunit bridges in the 70S ribosome. This Halothermothrix orenii (strain H 168 / OCM 544 / DSM 9562) protein is Large ribosomal subunit protein uL14.